The following is a 208-amino-acid chain: Large ribosomal subunit protein uL3 (208 aa).

The tract at residues 134–153 is disordered; it reads SKFHREAGSTGQCTSPGRTF.

It belongs to the universal ribosomal protein uL3 family. As to quaternary structure, part of the 50S ribosomal subunit. Forms a cluster with proteins L14 and L19.

Functionally, one of the primary rRNA binding proteins, it binds directly near the 3'-end of the 23S rRNA, where it nucleates assembly of the 50S subunit. The chain is Large ribosomal subunit protein uL3 from Treponema pallidum (strain Nichols).